We begin with the raw amino-acid sequence, 446 residues long: GRAM domain-containing protein 2B (446 aa).

Position 1 is an N-acetylmethionine (Met-1). The disordered stretch occupies residues 1-120; that stretch reads MVKKRLPSND…RKKSSSSSQY (120 aa). Residues 29 to 43 are compositionally biased toward low complexity; the sequence is SRSSTDSPSSVFFSS. Positions 95–113 are enriched in basic and acidic residues; it reads DKNDCKTESKNDPKTERKK. Residues 124–191 enclose the GRAM domain; the sequence is MHFHKLFLSV…FSVTLIKKTK (68 aa). Positions 234 to 247 are enriched in polar residues; the sequence is TSVGNSPNPSSAEN. Residues 234-253 are disordered; that stretch reads TSVGNSPNPSSAENSFRADR. Phosphoserine occurs at positions 239, 256, and 266. A disordered region spans residues 276 to 298; that stretch reads RQDMEGYSSSGSQTPESENSRDF. The segment covering 282–292 has biased composition (polar residues); it reads YSSSGSQTPES.

The protein is GRAM domain-containing protein 2B (GRAMD2B) of Pongo abelii (Sumatran orangutan).